The chain runs to 181 residues: MFPRRLLPASLIVLGVLFGASAQASPAHGQAFGKPAQAAQASRSIEVVLGDMYFKPRAIEVKAGETVRFVLKNEGKLLHEFNLGDAAMHAEHQKEMLEMQQSGMLTPTGMASMDHSQMGHGMADMDHGRMMKHDDPNSVLVEPGKSAELTWTFTKATRLEFACNIPGHYQAGMVGQLTVQP.

The signal sequence occupies residues 1-24; it reads MFPRRLLPASLIVLGVLFGASAQA. The Cu(2+) site is built by His-79, Cys-163, His-168, and Met-173.

Belongs to the CopI family.

The protein resides in the periplasm. Its function is as follows. Involved in copper tolerance. The chain is Copper-resistant cuproprotein CopI from Pseudomonas aeruginosa (strain ATCC 15692 / DSM 22644 / CIP 104116 / JCM 14847 / LMG 12228 / 1C / PRS 101 / PAO1).